Reading from the N-terminus, the 212-residue chain is MHFTQFMGQASVEQDTFGSSGFTRINVGRNTDITVQINRGFTSHFNRLSKLEAEVREGFVGFSHAVYFFTFFHGAATAFCGINQLIGQAQIHGFFATLAGCIAHPAHCQGQTAGRTNLNRNLVVSTTNTAAFHFHDGFGIVDGFVKHFDCLFALYFLGSLLQSTIHDALVNRFFTVNHQGIHKLGQFNAAELRIRQYVALRDFSTSWHFNFL.

It is found in the secreted. Its function is as follows. Induces agglutination of neuraminidase-treated erythrocytes. The chain is Hemagglutinin 2 (hag2) from Eikenella corrodens.